Consider the following 187-residue polypeptide: UPF0340 protein SMU_87 (187 aa).

Belongs to the UPF0340 family.

The sequence is that of UPF0340 protein SMU_87 from Streptococcus mutans serotype c (strain ATCC 700610 / UA159).